Here is a 953-residue protein sequence, read N- to C-terminus: Serine-aspartate repeat-containing protein C (953 aa).

An N-terminal signal peptide occupies residues 1–50 (MNNKKTATNRKGMIPNRLNKFSIRKYSVGTASILVGTTLIFGLSGHEAKA). Positions 51–160 (AEHTNGELNQ…AKNVSTTPKT (110 aa)) are disordered. The segment at 51–495 (AEHTNGELNQ…GSSTANGDQK (445 aa)) is ligand binding A region. The span at 56–71 (GELNQSKNETTAPSEN) shows a compositional bias: polar residues. Positions 72 to 83 (KTTEKVDSRQLK) are enriched in basic and acidic residues. Residues 84–114 (DNTQTATADQPKVTMSDSATVKETSSNMQSP) show a composition bias toward polar residues. The segment covering 115–132 (QNATASQSTTQTSNVTTN) has biased composition (low complexity). Polar residues predominate over residues 133 to 160 (DKSSTTYSNETDKSNLTQAKNVSTTPKT). 2 CNA-B domains span residues 496-606 (KYNL…YKTP) and 607-717 (KYSL…EEET). A disordered region spans residues 678–933 (TQTGTNTTED…NNSNNGTLFG (256 aa)). 2 stretches are compositionally biased toward acidic residues: residues 685–695 (TEDDKDADGGE) and 712–892 (YYEE…DSDS). The short motif at 916 to 920 (LPETG) is the LPXTG sorting signal element. Residues 918-933 (ETGSENNNSNNGTLFG) show a composition bias toward low complexity. Threonine 919 is subject to Pentaglycyl murein peptidoglycan amidated threonine. A propeptide spans 920–953 (GSENNNSNNGTLFGGLFAALGSLLLFGRRKKQNK) (removed by sortase).

The protein belongs to the serine-aspartate repeat-containing protein (SDr) family. As to quaternary structure, homodimerizes; via N2-Domain. Interacts with host NRXN1; this interaction mediates bacterial attachment to host cells.

Its subcellular location is the secreted. The protein localises to the cell wall. Its function is as follows. Cell surface-associated calcium-binding protein which plays an important role in adhesion and pathogenesis. Mediates interactions with components of the extracellular matrix such as host NRXN1 to promote bacterial adhesion. The polypeptide is Serine-aspartate repeat-containing protein C (sdrC) (Staphylococcus aureus (strain Mu50 / ATCC 700699)).